The chain runs to 188 residues: Crossover junction endodeoxyribonuclease RuvC (188 aa).

Active-site residues include Asp-7, Glu-68, and Asp-141. Residues Asp-7, Glu-68, and Asp-141 each coordinate Mg(2+).

The protein belongs to the RuvC family. Homodimer which binds Holliday junction (HJ) DNA. The HJ becomes 2-fold symmetrical on binding to RuvC with unstacked arms; it has a different conformation from HJ DNA in complex with RuvA. In the full resolvosome a probable DNA-RuvA(4)-RuvB(12)-RuvC(2) complex forms which resolves the HJ. Mg(2+) serves as cofactor.

Its subcellular location is the cytoplasm. It catalyses the reaction Endonucleolytic cleavage at a junction such as a reciprocal single-stranded crossover between two homologous DNA duplexes (Holliday junction).. Functionally, the RuvA-RuvB-RuvC complex processes Holliday junction (HJ) DNA during genetic recombination and DNA repair. Endonuclease that resolves HJ intermediates. Cleaves cruciform DNA by making single-stranded nicks across the HJ at symmetrical positions within the homologous arms, yielding a 5'-phosphate and a 3'-hydroxyl group; requires a central core of homology in the junction. The consensus cleavage sequence is 5'-(A/T)TT(C/G)-3'. Cleavage occurs on the 3'-side of the TT dinucleotide at the point of strand exchange. HJ branch migration catalyzed by RuvA-RuvB allows RuvC to scan DNA until it finds its consensus sequence, where it cleaves and resolves the cruciform DNA. The polypeptide is Crossover junction endodeoxyribonuclease RuvC (Mycobacterium leprae (strain TN)).